The primary structure comprises 89 residues: MSLNAETKAGIVEKYRRDPSDTGSPEVQVALLSARIDHLMGHFASHKKDHHSRRGLLKMVNQRRKLLDYLKSQDQQRYQDLVSSLGLRR.

The tract at residues 1–24 is disordered; it reads MSLNAETKAGIVEKYRRDPSDTGS. Basic and acidic residues predominate over residues 11–20; sequence IVEKYRRDPS.

This sequence belongs to the universal ribosomal protein uS15 family. Part of the 30S ribosomal subunit. Forms a bridge to the 50S subunit in the 70S ribosome, contacting the 23S rRNA.

Its function is as follows. One of the primary rRNA binding proteins, it binds directly to 16S rRNA where it helps nucleate assembly of the platform of the 30S subunit by binding and bridging several RNA helices of the 16S rRNA. Forms an intersubunit bridge (bridge B4) with the 23S rRNA of the 50S subunit in the ribosome. The protein is Small ribosomal subunit protein uS15 of Thioalkalivibrio sulfidiphilus (strain HL-EbGR7).